The following is a 497-amino-acid chain: Cytochrome P450 2D6 (497 aa).

D301 lines the substrate pocket. A heme-binding site is contributed by C443.

It belongs to the cytochrome P450 family. Heme is required as a cofactor.

It is found in the endoplasmic reticulum membrane. It localises to the microsome membrane. It carries out the reaction (5Z,8Z,11Z,14Z)-eicosatetraenoate + reduced [NADPH--hemoprotein reductase] + O2 = (8R,9S)-epoxy-(5Z,11Z,14Z)-eicosatrienoate + oxidized [NADPH--hemoprotein reductase] + H2O + H(+). The enzyme catalyses (5Z,8Z,11Z,14Z)-eicosatetraenoate + reduced [NADPH--hemoprotein reductase] + O2 = (11R,12S)-epoxy-(5Z,8Z,14Z)-eicosatrienoate + oxidized [NADPH--hemoprotein reductase] + H2O + H(+). It catalyses the reaction (5Z,8Z,11Z,14Z)-eicosatetraenoate + reduced [NADPH--hemoprotein reductase] + O2 = (14S,15R)-epoxy-(5Z,8Z,11Z)-eicosatrienoate + oxidized [NADPH--hemoprotein reductase] + H2O + H(+). The catalysed reaction is N-(5Z,8Z,11Z,14Z-eicosatetraenoyl)-ethanolamine + reduced [NADPH--hemoprotein reductase] + O2 = N-(8,9-epoxy-5Z,11Z,14Z-eicosatrienoyl)-ethanolamine + oxidized [NADPH--hemoprotein reductase] + H2O + H(+). It carries out the reaction N-(5Z,8Z,11Z,14Z-eicosatetraenoyl)-ethanolamine + reduced [NADPH--hemoprotein reductase] + O2 = N-(11,12-epoxy-5Z,8Z,14Z-eicosatrienoyl)-ethanolamine + oxidized [NADPH--hemoprotein reductase] + H2O + H(+). The enzyme catalyses N-(5Z,8Z,11Z,14Z-eicosatetraenoyl)-ethanolamine + reduced [NADPH--hemoprotein reductase] + O2 = N-(14,15-epoxy-5Z,8Z,11Z-eicosatrienoyl)-ethanolamine + oxidized [NADPH--hemoprotein reductase] + H2O + H(+). It catalyses the reaction N-(5Z,8Z,11Z,14Z-eicosatetraenoyl)-ethanolamine + reduced [NADPH--hemoprotein reductase] + O2 = N-(20-hydroxy-5Z,8Z,11Z,14Z-eicosatetraenoyl)-ethanolamine + oxidized [NADPH--hemoprotein reductase] + H2O + H(+). The catalysed reaction is (5Z,8Z,11Z,14Z,17Z)-eicosapentaenoate + reduced [NADPH--hemoprotein reductase] + O2 = (17S,18R)-epoxy-(5Z,8Z,11Z,14Z)-eicosatetraenoate + oxidized [NADPH--hemoprotein reductase] + H2O + H(+). It carries out the reaction (4Z,7Z,10Z,13Z,16Z,19Z)-docosahexaenoate + reduced [NADPH--hemoprotein reductase] + O2 = (19R,20S)-epoxy-(4Z,7Z,10Z,13Z,16Z)-docosapentaenoate + oxidized [NADPH--hemoprotein reductase] + H2O + H(+). The enzyme catalyses (4Z,7Z,10Z,13Z,16Z,19Z)-docosahexaenoate + reduced [NADPH--hemoprotein reductase] + O2 = (19S,20R)-epoxy-(4Z,7Z,10Z,13Z,16Z)-docosapentaenoate + oxidized [NADPH--hemoprotein reductase] + H2O + H(+). It catalyses the reaction cholesterol + reduced [NADPH--hemoprotein reductase] + O2 = 25-hydroxycholesterol + oxidized [NADPH--hemoprotein reductase] + H2O + H(+). The catalysed reaction is all-trans-retinol + reduced [NADPH--hemoprotein reductase] + O2 = all-trans-retinal + oxidized [NADPH--hemoprotein reductase] + 2 H2O + H(+). It participates in cofactor metabolism; retinol metabolism. Its pathway is lipid metabolism; fatty acid metabolism. The protein operates within steroid metabolism; cholesterol metabolism. A cytochrome P450 monooxygenase involved in the metabolism of fatty acids, steroids and retinoids. Mechanistically, uses molecular oxygen inserting one oxygen atom into a substrate, and reducing the second into a water molecule, with two electrons provided by NADPH via cytochrome P450 reductase (NADPH--hemoprotein reductase). Catalyzes the epoxidation of double bonds of polyunsaturated fatty acids (PUFA). Metabolizes endocannabinoid arachidonoylethanolamide (anandamide) to 20-hydroxyeicosatetraenoic acid ethanolamide (20-HETE-EA) and 8,9-, 11,12-, and 14,15-epoxyeicosatrienoic acid ethanolamides (EpETrE-EAs), potentially modulating endocannabinoid system signaling. Catalyzes the hydroxylation of carbon-hydrogen bonds. Metabolizes cholesterol toward 25-hydroxycholesterol, a physiological regulator of cellular cholesterol homeostasis. Catalyzes the oxidative transformations of all-trans retinol to all-trans retinal, a precursor for the active form all-trans-retinoic acid. Also involved in the oxidative metabolism of drugs such as antiarrhythmics, adrenoceptor antagonists, and tricyclic antidepressants. The sequence is that of Cytochrome P450 2D6 (CYP2D6) from Pan troglodytes (Chimpanzee).